The following is a 295-amino-acid chain: Ankyrin repeat and SOCS box protein 17 (295 aa).

An ANK repeat occupies 146-176; sequence SGITPLLYVAQTRQSNILKILLQYGILEREK. Residues 243–295 form the SOCS box domain; that stretch reads DYIPPTRYKDPCELVHLCRITIRTQLLANNMLPNGIFSLLIPTRLQNFLNLES.

This sequence belongs to the ankyrin SOCS box (ASB) family. In terms of tissue distribution, specifically expressed in testis. Localizes to spermatogenic cells in testis, with highest expression in round spermatids and condensing spermatids and lower expression in pachytene spermatocytes.

It functions in the pathway protein modification; protein ubiquitination. Its function is as follows. May be a substrate-recognition component of a SCF-like ECS (Elongin-Cullin-SOCS-box protein) E3 ubiquitin-protein ligase complex which mediates the ubiquitination and subsequent proteasomal degradation of target proteins. This Mus musculus (Mouse) protein is Ankyrin repeat and SOCS box protein 17 (Asb17).